Consider the following 286-residue polypeptide: MIQDILHRYLFDNADVRGELVQLQDSYQQVIGSHAYPPVLQILLGELLAATSLLTATLKFSGDISVQLQGNGPVSLAVINGSNQQQLRGIARWDGELADDASLADLFGQGYMVITLTPDEGERYQGVVALDKPTLAACVEDYFNQSEQLPTALWLFADGKQAAGMFLQVLPSQEDHNADFEHLCQLTATIKAEELFTLEAQEVLHRLYHQEDVRLFDPIEVCFKCTCSRERSAAAIKTIDQAEVEAILAEDGKVEMGCEYCNAKYVFDGIDIAAIYANGTASNTQQ.

Cystine bridges form between Cys225/Cys227 and Cys258/Cys261.

It belongs to the HSP33 family. In terms of processing, under oxidizing conditions two disulfide bonds are formed involving the reactive cysteines. Under reducing conditions zinc is bound to the reactive cysteines and the protein is inactive.

The protein localises to the cytoplasm. Redox regulated molecular chaperone. Protects both thermally unfolding and oxidatively damaged proteins from irreversible aggregation. Plays an important role in the bacterial defense system toward oxidative stress. This is 33 kDa chaperonin from Shewanella sp. (strain MR-4).